The sequence spans 129 residues: Large ribosomal subunit protein bL12 (129 aa).

This sequence belongs to the bacterial ribosomal protein bL12 family. In terms of assembly, homodimer. Part of the ribosomal stalk of the 50S ribosomal subunit. Forms a multimeric L10(L12)X complex, where L10 forms an elongated spine to which 2 to 4 L12 dimers bind in a sequential fashion. Binds GTP-bound translation factors.

Its function is as follows. Forms part of the ribosomal stalk which helps the ribosome interact with GTP-bound translation factors. Is thus essential for accurate translation. This is Large ribosomal subunit protein bL12 from Treponema pallidum (strain Nichols).